The sequence spans 696 residues: DNA-directed RNA polymerase subunit beta' (696 aa).

Positions 69, 71, 87, and 90 each coordinate Zn(2+). Mg(2+) is bound by residues aspartate 504, aspartate 506, and aspartate 508.

The protein belongs to the RNA polymerase beta' chain family. RpoC1 subfamily. In plastids the minimal PEP RNA polymerase catalytic core is composed of four subunits: alpha, beta, beta', and beta''. When a (nuclear-encoded) sigma factor is associated with the core the holoenzyme is formed, which can initiate transcription. The cofactor is Mg(2+). Requires Zn(2+) as cofactor.

It localises to the plastid. Its subcellular location is the chloroplast. It catalyses the reaction RNA(n) + a ribonucleoside 5'-triphosphate = RNA(n+1) + diphosphate. Functionally, DNA-dependent RNA polymerase catalyzes the transcription of DNA into RNA using the four ribonucleoside triphosphates as substrates. The chain is DNA-directed RNA polymerase subunit beta' from Pinus thunbergii (Japanese black pine).